Reading from the N-terminus, the 237-residue chain is MPKHGKKYLAALAKVDRTRLYSPTEALALVKETSYTKFDGTVEAHLRLGIDPRHADQNIRTTVALPHGTGKTVRVLVFAQGEAVQAALDAGADYAGSDDLIARIDRENFFDFDVAIATPDMMGKVGRIGRKLGPRGLMPNPKSGTIVPAADLARTIREVKGGRVEIRNDKTGILHVAIGKVSFTPQQLSENFVALMDAVKAAKPSGAKGTYIRSVTLTSTMGPGVPVDPVAAQNLKA.

This sequence belongs to the universal ribosomal protein uL1 family. Part of the 50S ribosomal subunit.

Functionally, binds directly to 23S rRNA. The L1 stalk is quite mobile in the ribosome, and is involved in E site tRNA release. Its function is as follows. Protein L1 is also a translational repressor protein, it controls the translation of the L11 operon by binding to its mRNA. This is Large ribosomal subunit protein uL1 from Chloroflexus aurantiacus (strain ATCC 29364 / DSM 637 / Y-400-fl).